The chain runs to 363 residues: Protein-arginine kinase (363 aa).

The Phosphagen kinase C-terminal domain occupies 24 to 254 (IVLSSRIRLA…AQLIEQERSA (231 aa)). Residues 27 to 31 (SSRIR), His92, Arg125, 176 to 180 (RASVM), and 207 to 212 (RGIYGE) contribute to the ATP site. Positions 337 to 342 (RDIRRA) match the RDXXRA motif of the pArg binding pocket involved in allosteric regulation motif.

The protein belongs to the ATP:guanido phosphotransferase family.

It carries out the reaction L-arginyl-[protein] + ATP = N(omega)-phospho-L-arginyl-[protein] + ADP + H(+). With respect to regulation, appears to be allosterically activated by the binding of pArg-containing polypeptides to the pArg-binding pocket localized in the C-terminal domain of McsB. Its function is as follows. Catalyzes the specific phosphorylation of arginine residues in a large number of proteins. Is part of the bacterial stress response system. Protein arginine phosphorylation has a physiologically important role and is involved in the regulation of many critical cellular processes, such as protein homeostasis, motility, competence, and stringent and stress responses, by regulating gene expression and protein activity. The polypeptide is Protein-arginine kinase (Bacillus licheniformis (strain ATCC 14580 / DSM 13 / JCM 2505 / CCUG 7422 / NBRC 12200 / NCIMB 9375 / NCTC 10341 / NRRL NRS-1264 / Gibson 46)).